The sequence spans 126 residues: Cytochrome c2 (126 aa).

Residues Cys-17, Cys-20, His-21, and Met-101 each contribute to the heme c site.

Belongs to the cytochrome c family. Post-translationally, binds 1 heme c group covalently per subunit.

The protein resides in the periplasm. In terms of biological role, cytochrome c2 is found mainly in purple, non-sulfur, photosynthetic bacteria where it functions as the electron donor to the oxidized bacteriochlorophyll in the photophosphorylation pathway. However, it may also have a role in the respiratory chain and is found in some non-photosynthetic bacteria. The sequence is that of Cytochrome c2 from Rhodovulum adriaticum (Rhodopseudomonas adriatica).